We begin with the raw amino-acid sequence, 340 residues long: GTP-binding protein REM 2 (340 aa).

The span at 1–13 shows a compositional bias: acidic residues; the sequence is MHTDLDTDMDMDT. The disordered stretch occupies residues 1-107; it reads MHTDLDTDMD…SDSLGSGEAA (107 aa). Position 27 is a phosphoserine (Ser-27). Over residues 40–53 the composition is skewed to basic and acidic residues; the sequence is LLKKSEKLLAELDR. Over residues 93–104 the composition is skewed to low complexity; it reads SSSGSSDSLGSG. Residues 121 to 128, 229 to 232, and 260 to 261 each bind GTP; these read GESGVGKS, NKSD, and AA. The interval 283–308 is disordered; that stretch reads RNHAGGQRPDPGSPEGPAPPARRESL. The span at 293–302 shows a compositional bias: pro residues; the sequence is PGSPEGPAPP. A Phosphoserine modification is found at Ser-295.

The protein belongs to the small GTPase superfamily. RGK family.

It is found in the cell membrane. In terms of biological role, binds GTP saturably and exhibits a low intrinsic rate of GTP hydrolysis. This Homo sapiens (Human) protein is GTP-binding protein REM 2 (REM2).